A 235-amino-acid chain; its full sequence is uncharacterized protein (235 aa).

The ABC transporter domain maps to 2-235 (IKLKNVTKTY…EEKLRGFDDR (234 aa)). Residue 38–45 (GPSGSGKS) coordinates ATP.

This sequence belongs to the ABC transporter superfamily.

This is an uncharacterized protein from Methanocaldococcus jannaschii (strain ATCC 43067 / DSM 2661 / JAL-1 / JCM 10045 / NBRC 100440) (Methanococcus jannaschii).